Here is a 99-residue protein sequence, read N- to C-terminus: Malonate decarboxylase acyl carrier protein (99 aa).

Ser25 carries the post-translational modification O-(phosphoribosyl dephospho-coenzyme A)serine.

This sequence belongs to the MdcC family. In terms of processing, covalently binds the prosthetic group of malonate decarboxylase.

The protein localises to the cytoplasm. Functionally, subunit of malonate decarboxylase, it is an acyl carrier protein to which acetyl and malonyl thioester residues are bound via a 2'-(5''-phosphoribosyl)-3'-dephospho-CoA prosthetic group and turn over during the catalytic mechanism. The sequence is that of Malonate decarboxylase acyl carrier protein from Pseudomonas fluorescens (strain ATCC BAA-477 / NRRL B-23932 / Pf-5).